The following is a 1299-amino-acid chain: DNA-directed RNA polymerase subunit beta' (1299 aa).

Zn(2+)-binding residues include cysteine 60, cysteine 62, cysteine 75, and cysteine 78. Mg(2+)-binding residues include aspartate 535, aspartate 537, and aspartate 539. Cysteine 877, cysteine 954, cysteine 961, and cysteine 964 together coordinate Zn(2+).

This sequence belongs to the RNA polymerase beta' chain family. In terms of assembly, the RNAP catalytic core consists of 2 alpha, 1 beta, 1 beta' and 1 omega subunit. When a sigma factor is associated with the core the holoenzyme is formed, which can initiate transcription. The cofactor is Mg(2+). Requires Zn(2+) as cofactor.

The catalysed reaction is RNA(n) + a ribonucleoside 5'-triphosphate = RNA(n+1) + diphosphate. In terms of biological role, DNA-dependent RNA polymerase catalyzes the transcription of DNA into RNA using the four ribonucleoside triphosphates as substrates. The sequence is that of DNA-directed RNA polymerase subunit beta' from Pseudarthrobacter chlorophenolicus (strain ATCC 700700 / DSM 12829 / CIP 107037 / JCM 12360 / KCTC 9906 / NCIMB 13794 / A6) (Arthrobacter chlorophenolicus).